The sequence spans 160 residues: Nucleotide-binding protein MADE_1020535 (160 aa).

The protein belongs to the YajQ family.

In terms of biological role, nucleotide-binding protein. In Alteromonas mediterranea (strain DSM 17117 / CIP 110805 / LMG 28347 / Deep ecotype), this protein is Nucleotide-binding protein MADE_1020535.